Here is a 145-residue protein sequence, read N- to C-terminus: Deoxyuridine 5'-triphosphate nucleotidohydrolase (145 aa).

Substrate is bound by residues 65-67, N78, 82-84, and K92; these read RSG and TID.

This sequence belongs to the dUTPase family. Mg(2+) serves as cofactor.

It catalyses the reaction dUTP + H2O = dUMP + diphosphate + H(+). Its pathway is pyrimidine metabolism; dUMP biosynthesis; dUMP from dCTP (dUTP route): step 2/2. Its function is as follows. This enzyme is involved in nucleotide metabolism: it produces dUMP, the immediate precursor of thymidine nucleotides and it decreases the intracellular concentration of dUTP so that uracil cannot be incorporated into DNA. In Syntrophomonas wolfei subsp. wolfei (strain DSM 2245B / Goettingen), this protein is Deoxyuridine 5'-triphosphate nucleotidohydrolase.